The chain runs to 119 residues: Beta-2-microglobulin (119 aa).

The signal sequence occupies residues 1–20 (MARLVVVALLVLLCLSGLEA). The region spanning 25–114 (PKIQVYSRHP…VTFTAPKTVK (90 aa)) is the Ig-like C1-type domain. The cysteines at positions 45 and 100 are disulfide-linked.

Belongs to the beta-2-microglobulin family. As to quaternary structure, heterodimer of an alpha chain and a beta chain. Beta-2-microglobulin is the beta-chain of major histocompatibility complex class I molecules.

Its subcellular location is the secreted. Component of the class I major histocompatibility complex (MHC). Involved in the presentation of peptide antigens to the immune system. The polypeptide is Beta-2-microglobulin (B2M) (Chiropotes satanas (Brown-bearded saki)).